Here is a 147-residue protein sequence, read N- to C-terminus: Large ribosomal subunit protein uL15 (147 aa).

A disordered region spans residues 1–55; it reads MKLHEIAPQPGSTKRRRRVGRGVSAGQGASCGLGMRGQKSRSGTGTRPGFEGGQM. The segment covering 23 to 35 has biased composition (gly residues); sequence VSAGQGASCGLGM.

This sequence belongs to the universal ribosomal protein uL15 family. As to quaternary structure, part of the 50S ribosomal subunit.

Its function is as follows. Binds to the 23S rRNA. The sequence is that of Large ribosomal subunit protein uL15 from Microcystis aeruginosa (strain NIES-843 / IAM M-2473).